Here is a 352-residue protein sequence, read N- to C-terminus: MSKQPSLSYKDAGVDIDAGEALVERIKSVAKRTKRPEVMGGLGGFGALCEIPAGYKQPVLVSGTDGVGTKLRLALNLNKHDTIGIDLVAMCVNDLVVCGAEPLFFLDYYATGKLNVDTAAQVVTGIGAGCELAGCSLVGGETAEMPGMYEGEDYDLAGFCVGVVEKAEIIDGSKVAAGDALLALPSSGPHSNGYSLIRKIIEVAGADIESIQLDGKPLTELLMAPTRIYVKPLLKLIKETGAVKAMAHITGGGLLDNIPRVLPEGAQAVVDVASWQRPAVFDWLQQQGNVAENEMHRVLNCGVGMVICVAQEHVEAALKVLREAGEQPWVIGQIATAAEGAAQVELKNLKAH.

Belongs to the AIR synthase family.

Its subcellular location is the cytoplasm. The catalysed reaction is 2-formamido-N(1)-(5-O-phospho-beta-D-ribosyl)acetamidine + ATP = 5-amino-1-(5-phospho-beta-D-ribosyl)imidazole + ADP + phosphate + H(+). The protein operates within purine metabolism; IMP biosynthesis via de novo pathway; 5-amino-1-(5-phospho-D-ribosyl)imidazole from N(2)-formyl-N(1)-(5-phospho-D-ribosyl)glycinamide: step 2/2. In Pseudomonas savastanoi pv. phaseolicola (strain 1448A / Race 6) (Pseudomonas syringae pv. phaseolicola (strain 1448A / Race 6)), this protein is Phosphoribosylformylglycinamidine cyclo-ligase.